We begin with the raw amino-acid sequence, 579 residues long: Aspartate--tRNA(Asp/Asn) ligase (579 aa).

E169 contributes to the L-aspartate binding site. The tract at residues 193–196 (QLFK) is aspartate. R215 serves as a coordination point for L-aspartate. Residues 215–217 (RDE) and Q224 each bind ATP. H437 lines the L-aspartate pocket. An ATP-binding site is contributed by E471. An L-aspartate-binding site is contributed by R478. 523–526 (GWDR) is a binding site for ATP. A disordered region spans residues 551-579 (DPLTGAPTPITAEQRREAGVDAVPEQATS).

The protein belongs to the class-II aminoacyl-tRNA synthetase family. Type 1 subfamily. Homodimer.

The protein resides in the cytoplasm. It catalyses the reaction tRNA(Asx) + L-aspartate + ATP = L-aspartyl-tRNA(Asx) + AMP + diphosphate. Its function is as follows. Aspartyl-tRNA synthetase with relaxed tRNA specificity since it is able to aspartylate not only its cognate tRNA(Asp) but also tRNA(Asn). Reaction proceeds in two steps: L-aspartate is first activated by ATP to form Asp-AMP and then transferred to the acceptor end of tRNA(Asp/Asn). The polypeptide is Aspartate--tRNA(Asp/Asn) ligase (Thermobifida fusca (strain YX)).